The following is a 312-amino-acid chain: Acetaldehyde dehydrogenase 4 (312 aa).

12–15 (SGNI) serves as a coordination point for NAD(+). Cys132 (acyl-thioester intermediate) is an active-site residue. NAD(+) contacts are provided by residues 163 to 171 (SAGPGTRAN) and Asn290.

This sequence belongs to the acetaldehyde dehydrogenase family.

It catalyses the reaction acetaldehyde + NAD(+) + CoA = acetyl-CoA + NADH + H(+). This Azotobacter vinelandii (strain DJ / ATCC BAA-1303) protein is Acetaldehyde dehydrogenase 4.